Here is a 404-residue protein sequence, read N- to C-terminus: SAC3 domain-containing protein 1 (404 aa).

Disordered stretches follow at residues 1-58 (MAGR…GTCP) and 77-117 (RLEV…QLRP). The segment covering 12 to 21 (PPRPAAPHPR) has biased composition (pro residues). Basic and acidic residues predominate over residues 87 to 101 (DPPRADPQRAVKEYS). Positions 203 to 379 (QVQEGFGSLR…TCKVLVESKL (177 aa)) constitute a PCI domain. A Phosphoserine modification is found at S402.

It belongs to the SAC3 family. In terms of assembly, may be part of a SEM1-containing complex.

It localises to the cytoplasm. The protein localises to the cytoskeleton. Its subcellular location is the microtubule organizing center. It is found in the centrosome. The protein resides in the spindle. Involved in centrosome duplication and mitotic progression. This is SAC3 domain-containing protein 1 (SAC3D1) from Homo sapiens (Human).